A 373-amino-acid polypeptide reads, in one-letter code: Saccharopine dehydrogenase [NAD(+), L-lysine-forming] (373 aa).

An N-acetylalanine; partial modification is found at A2. Residues R18 and K77 each contribute to the L-saccharopine site. Residue K77 is the Proton acceptor of the active site. H96 serves as the catalytic Proton donor. Position 101 (Q101) interacts with L-saccharopine. Residue R130 coordinates NAD(+). Residues R131 and F135 each contribute to the L-saccharopine site. Residues 203–204, D227, T231, Y251, and V278 contribute to the NAD(+) site; that span reads GR. Residues C205 and C249 are joined by a disulfide bond. L-saccharopine is bound at residue 279–281; the sequence is SAD. 318–321 contributes to the NAD(+) binding site; sequence IDHL. The short motif at 371–373 is the Microbody targeting signal element; sequence SRL.

It belongs to the AlaDH/PNT family. Monomer.

Its subcellular location is the peroxisome. The enzyme catalyses L-saccharopine + NAD(+) + H2O = L-lysine + 2-oxoglutarate + NADH + H(+). Its pathway is amino-acid biosynthesis; L-lysine biosynthesis via AAA pathway; L-lysine from L-alpha-aminoadipate (fungal route): step 3/3. Its activity is regulated as follows. Inhibited by p-chloromercuribenzoate and iodoacetate by modification of the active site cysteine residue. Inhibited by diethyl pyrocarbonate by modification of histidine residues. Inhibited by pyridoxal 5'-phosphate by modification of an essential lysine residue. Catalyzes the NAD(+)-dependent cleavage of saccharopine to L-lysine and 2-oxoglutarate, the final step in the alpha-aminoadipate (AAA) pathway for lysine biosynthesis. In Saccharomyces cerevisiae (strain ATCC 204508 / S288c) (Baker's yeast), this protein is Saccharopine dehydrogenase [NAD(+), L-lysine-forming].